The primary structure comprises 105 residues: Large ribosomal subunit protein uL24 (105 aa).

The tract at residues 67–105 is disordered; the sequence is HISNLNPVDPKTGKATRIGRRKSSEGTLVRYSKKSGEEI.

This sequence belongs to the universal ribosomal protein uL24 family. In terms of assembly, part of the 50S ribosomal subunit.

Its function is as follows. One of two assembly initiator proteins, it binds directly to the 5'-end of the 23S rRNA, where it nucleates assembly of the 50S subunit. One of the proteins that surrounds the polypeptide exit tunnel on the outside of the subunit. The chain is Large ribosomal subunit protein uL24 from Bacteroides thetaiotaomicron (strain ATCC 29148 / DSM 2079 / JCM 5827 / CCUG 10774 / NCTC 10582 / VPI-5482 / E50).